Consider the following 265-residue polypeptide: Mlc titration factor A (265 aa).

Residues histidine 111, histidine 148, histidine 152, and glutamate 211 each contribute to the Zn(2+) site.

This sequence belongs to the MtfA family. As to quaternary structure, interacts with Mlc. It depends on Zn(2+) as a cofactor.

The protein localises to the cytoplasm. In terms of biological role, involved in the modulation of the activity of the glucose-phosphotransferase system (glucose-PTS). Interacts with the transcriptional repressor Mlc, preventing its interaction with DNA and leading to the modulation of expression of genes regulated by Mlc, including ptsG, which encodes the PTS system glucose-specific EIICB component. Functionally, shows zinc-dependent metallopeptidase activity. This chain is Mlc titration factor A, found in Escherichia fergusonii.